The primary structure comprises 290 residues: MKGRTITLIAGPTASGKSALALQIAQEKNALIINTDSMQVYDVLNILTARPTRTDTATVPHYLYGYVNPALHYSVGQWLCDVSKLLMTFTSKSLIFVGGTGLYFRALLEGISKIPDIPDVVRQKWRLRLDKEGAENLYRQLWQVDAVLAEKISSQDGQRIVRALEVYDATDKKLSWWQKKKTTPLIARNCSEKLLLIPPRQLLYERIHKRLDSMIEKGALEEVIAMKKLALSPLLPAMKAIGIPEFIAYLDGKQSFEEALEMVKTQTRRYAKRQITWFRNQFDEEWMLLS.

11–18 (GPTASGKS) contacts ATP. 13 to 18 (TASGKS) lines the substrate pocket. 2 interaction with substrate tRNA regions span residues 36 to 39 (DSMQ) and 158 to 162 (QRIVR).

It belongs to the IPP transferase family. Monomer. Mg(2+) is required as a cofactor.

The enzyme catalyses adenosine(37) in tRNA + dimethylallyl diphosphate = N(6)-dimethylallyladenosine(37) in tRNA + diphosphate. Catalyzes the transfer of a dimethylallyl group onto the adenine at position 37 in tRNAs that read codons beginning with uridine, leading to the formation of N6-(dimethylallyl)adenosine (i(6)A). The chain is tRNA dimethylallyltransferase from Bartonella henselae (strain ATCC 49882 / DSM 28221 / CCUG 30454 / Houston 1) (Rochalimaea henselae).